Here is a 202-residue protein sequence, read N- to C-terminus: Glycerol-3-phosphate acyltransferase (202 aa).

A run of 4 helical transmembrane segments spans residues 11–31 (VLIA…GLIL), 87–107 (PALA…WLGF), 116–136 (FIGV…AIWL), and 158–178 (LILW…LAAL).

The protein belongs to the PlsY family. Probably interacts with PlsX.

The protein localises to the cell inner membrane. The enzyme catalyses an acyl phosphate + sn-glycerol 3-phosphate = a 1-acyl-sn-glycero-3-phosphate + phosphate. It functions in the pathway lipid metabolism; phospholipid metabolism. In terms of biological role, catalyzes the transfer of an acyl group from acyl-phosphate (acyl-PO(4)) to glycerol-3-phosphate (G3P) to form lysophosphatidic acid (LPA). This enzyme utilizes acyl-phosphate as fatty acyl donor, but not acyl-CoA or acyl-ACP. The protein is Glycerol-3-phosphate acyltransferase of Methylorubrum extorquens (strain PA1) (Methylobacterium extorquens).